The sequence spans 397 residues: Chorismate synthase (397 aa).

Arg-40 and Arg-46 together coordinate NADP(+). Residues Arg-129–Ser-131, Gln-257–Ala-258, Gly-302, Lys-317–Ser-321, and Arg-343 contribute to the FMN site.

Belongs to the chorismate synthase family. In terms of assembly, homotetramer. FMNH2 is required as a cofactor.

The enzyme catalyses 5-O-(1-carboxyvinyl)-3-phosphoshikimate = chorismate + phosphate. It functions in the pathway metabolic intermediate biosynthesis; chorismate biosynthesis; chorismate from D-erythrose 4-phosphate and phosphoenolpyruvate: step 7/7. Functionally, catalyzes the anti-1,4-elimination of the C-3 phosphate and the C-6 proR hydrogen from 5-enolpyruvylshikimate-3-phosphate (EPSP) to yield chorismate, which is the branch point compound that serves as the starting substrate for the three terminal pathways of aromatic amino acid biosynthesis. This reaction introduces a second double bond into the aromatic ring system. The sequence is that of Chorismate synthase from Chlorobium limicola (strain DSM 245 / NBRC 103803 / 6330).